The following is a 113-amino-acid chain: Hydrogenase maturation factor HypA (113 aa).

Histidine 2 is a Ni(2+) binding site. Zn(2+)-binding residues include cysteine 73, cysteine 76, cysteine 89, and cysteine 92.

The protein belongs to the HypA/HybF family.

Involved in the maturation of [NiFe] hydrogenases. Required for nickel insertion into the metal center of the hydrogenase. This Chlorobium phaeobacteroides (strain BS1) protein is Hydrogenase maturation factor HypA.